A 130-amino-acid polypeptide reads, in one-letter code: Capsid protein (130 aa).

The segment at glutamate 32–isoleucine 105 is viral RNA-binding.

Belongs to the Leviviricetes capsid protein family. Homodimer. The capsid proteins form dimers that assemble by group of 5. Twelve such pentamers are linked together with free dimers. The homodimers binds to the viral RNA via an operator hairpin, but also to many other RNA sequences in the viral genome; this interaction probably shifts the virus from the replicative to the assembly phase and ensures specific encapsidation of the viral genome.

It localises to the virion. Its function is as follows. Capsid protein self-assembles to form an icosahedral capsid with a T=3 symmetry, about 26 nm in diameter, and consisting of 89 capsid proteins dimers (178 capsid proteins). Involved in viral genome encapsidation through the interaction between a capsid protein dimer and the multiple packaging signals present in the RNA genome. The capsid also contains 1 copy of the A2 maturation protein. Acts as a translational repressor of viral replicase synthesis late in infection. This latter function is the result of capsid protein interaction with an RNA hairpin which contains the replicase ribosome-binding site. This is Capsid protein from Escherichia coli (Bacteriophage MS2).